The chain runs to 376 residues: Chaperone protein DnaJ (376 aa).

The region spanning 5 to 70 (DFYDVLGVSK…EKKQNYDNFG (66 aa)) is the J domain. A CR-type zinc finger spans residues 137-215 (GKKQDIKFST…CNGQGNKQAS (79 aa)). Residues Cys-150, Cys-153, Cys-167, Cys-170, Cys-189, Cys-192, Cys-203, and Cys-206 each contribute to the Zn(2+) site. 4 CXXCXGXG motif repeats span residues 150–157 (CNTCNGNG), 167–174 (CTVCGGNG), 189–196 (CPQCAGSG), and 203–210 (CTDCNGQG).

This sequence belongs to the DnaJ family. In terms of assembly, homodimer. Zn(2+) is required as a cofactor.

The protein resides in the cytoplasm. Its function is as follows. Participates actively in the response to hyperosmotic and heat shock by preventing the aggregation of stress-denatured proteins and by disaggregating proteins, also in an autonomous, DnaK-independent fashion. Unfolded proteins bind initially to DnaJ; upon interaction with the DnaJ-bound protein, DnaK hydrolyzes its bound ATP, resulting in the formation of a stable complex. GrpE releases ADP from DnaK; ATP binding to DnaK triggers the release of the substrate protein, thus completing the reaction cycle. Several rounds of ATP-dependent interactions between DnaJ, DnaK and GrpE are required for fully efficient folding. Also involved, together with DnaK and GrpE, in the DNA replication of plasmids through activation of initiation proteins. This Pelagibacter ubique (strain HTCC1062) protein is Chaperone protein DnaJ.